The sequence spans 265 residues: Type III pantothenate kinase (265 aa).

Residue 6 to 13 (DVGNTHTV) coordinates ATP. 112-115 (GADR) provides a ligand contact to substrate. The active-site Proton acceptor is the D114. D134 provides a ligand contact to K(+). An ATP-binding site is contributed by T137. T189 provides a ligand contact to substrate.

Belongs to the type III pantothenate kinase family. In terms of assembly, homodimer. NH4(+) is required as a cofactor. Requires K(+) as cofactor.

The protein resides in the cytoplasm. The catalysed reaction is (R)-pantothenate + ATP = (R)-4'-phosphopantothenate + ADP + H(+). It participates in cofactor biosynthesis; coenzyme A biosynthesis; CoA from (R)-pantothenate: step 1/5. Catalyzes the phosphorylation of pantothenate (Pan), the first step in CoA biosynthesis. The polypeptide is Type III pantothenate kinase (Streptomyces griseus subsp. griseus (strain JCM 4626 / CBS 651.72 / NBRC 13350 / KCC S-0626 / ISP 5235)).